Reading from the N-terminus, the 96-residue chain is Protein Vpr (96 aa).

Residues 1–42 (MEQAPEDQGPQREPYNEWTIEILEELKREAVRHFPRPWLHDL) are homooligomerization. A phosphoserine; by host mark is found at serine 79, serine 94, and serine 96.

This sequence belongs to the HIV-1 VPR protein family. As to quaternary structure, homooligomer, may form homodimer. Interacts with p6-gag region of the Pr55 Gag precursor protein through a (Leu-X-X)4 motif near the C-terminus of the P6gag protein. Interacts with host UNG. May interact with host RAD23A/HHR23A. Interacts with host VPRBP/DCAF1, leading to hijack the CUL4A-RBX1-DDB1-DCAF1/VPRBP complex, mediating ubiquitination of host proteins such as TERT and ZGPAT and arrest of the cell cycle in G2 phase. In terms of processing, phosphorylated on several residues by host. These phosphorylations regulate VPR activity for the nuclear import of the HIV-1 pre-integration complex.

The protein localises to the virion. It localises to the host nucleus. The protein resides in the host extracellular space. During virus replication, may deplete host UNG protein, and incude G2-M cell cycle arrest. Acts by targeting specific host proteins for degradation by the 26S proteasome, through association with the cellular CUL4A-DDB1 E3 ligase complex by direct interaction with host VPRPB/DCAF-1. Cell cycle arrest reportedly occurs within hours of infection and is not blocked by antiviral agents, suggesting that it is initiated by the VPR carried into the virion. Additionally, VPR induces apoptosis in a cell cycle dependent manner suggesting that these two effects are mechanistically linked. Detected in the serum and cerebrospinal fluid of AIDS patient, VPR may also induce cell death to bystander cells. Its function is as follows. During virus entry, plays a role in the transport of the viral pre-integration (PIC) complex to the host nucleus. This function is crucial for viral infection of non-dividing macrophages. May act directly at the nuclear pore complex, by binding nucleoporins phenylalanine-glycine (FG)-repeat regions. The sequence is that of Protein Vpr from Human immunodeficiency virus type 1 group M subtype K (isolate 97ZR-EQTB11) (HIV-1).